A 119-amino-acid chain; its full sequence is Beta-2-microglobulin (119 aa).

A signal peptide spans 1-20 (MGRFVAVALLVLLSLSGLET). The Ig-like C1-type domain maps to 25-114 (PKIQVYSRHP…VTFSTPKTVK (90 aa)). A disulfide bridge connects residues C45 and C100.

Belongs to the beta-2-microglobulin family. Heterodimer of an alpha chain and a beta chain. Beta-2-microglobulin is the beta-chain of major histocompatibility complex class I molecules.

The protein resides in the secreted. Component of the class I major histocompatibility complex (MHC). Involved in the presentation of peptide antigens to the immune system. The polypeptide is Beta-2-microglobulin (B2M) (Callicebus personatus nigrifrons (Black-fronted titi)).